A 135-amino-acid chain; its full sequence is Small ribosomal subunit protein uS11 (135 aa).

A disordered region spans residues 1–22; it reads MPPKSRTAAGAKKVRRKEKKNV.

It belongs to the universal ribosomal protein uS11 family. As to quaternary structure, part of the 30S ribosomal subunit. Interacts with proteins S7 and S18. Binds to IF-3.

Its function is as follows. Located on the platform of the 30S subunit, it bridges several disparate RNA helices of the 16S rRNA. Forms part of the Shine-Dalgarno cleft in the 70S ribosome. The sequence is that of Small ribosomal subunit protein uS11 from Nocardioides sp. (strain ATCC BAA-499 / JS614).